Reading from the N-terminus, the 347-residue chain is 4-hydroxy-2-oxovalerate aldolase 1 (347 aa).

The region spanning Ile13–Ala265 is the Pyruvate carboxyltransferase domain. Substrate is bound at residue Arg21–Asp22. Asp22 contributes to the Mn(2+) binding site. Catalysis depends on His25, which acts as the Proton acceptor. Substrate is bound by residues Ser175 and His204. Positions 204 and 206 each coordinate Mn(2+). A substrate-binding site is contributed by Tyr295.

The protein belongs to the 4-hydroxy-2-oxovalerate aldolase family.

The catalysed reaction is (S)-4-hydroxy-2-oxopentanoate = acetaldehyde + pyruvate. This chain is 4-hydroxy-2-oxovalerate aldolase 1, found in Rhodococcus erythropolis (strain PR4 / NBRC 100887).